Reading from the N-terminus, the 428-residue chain is Glutamate-1-semialdehyde 2,1-aminomutase (428 aa).

The residue at position 265 (lysine 265) is an N6-(pyridoxal phosphate)lysine.

This sequence belongs to the class-III pyridoxal-phosphate-dependent aminotransferase family. HemL subfamily. In terms of assembly, homodimer. Pyridoxal 5'-phosphate is required as a cofactor.

The protein localises to the cytoplasm. It carries out the reaction (S)-4-amino-5-oxopentanoate = 5-aminolevulinate. It participates in porphyrin-containing compound metabolism; protoporphyrin-IX biosynthesis; 5-aminolevulinate from L-glutamyl-tRNA(Glu): step 2/2. This Shewanella sediminis (strain HAW-EB3) protein is Glutamate-1-semialdehyde 2,1-aminomutase.